The primary structure comprises 326 residues: GTPase Obg (326 aa).

Residues 1-159 (MKFVDSAKIY…LEIELELKLM (159 aa)) form the Obg domain. The disordered stretch occupies residues 119-138 (EGGKGGKGNPHFASSTRQAP). An OBG-type G domain is found at 160-323 (ADVGLVGFPN…LKDELWSRVK (164 aa)). GTP is bound by residues 166–173 (GFPNAGKS), 191–195 (FTTLV), 213–216 (DIPG), 280–283 (TKMD), and 304–306 (SSV). 2 residues coordinate Mg(2+): serine 173 and threonine 193.

Belongs to the TRAFAC class OBG-HflX-like GTPase superfamily. OBG GTPase family. As to quaternary structure, monomer. It depends on Mg(2+) as a cofactor.

The protein localises to the cytoplasm. An essential GTPase which binds GTP, GDP and possibly (p)ppGpp with moderate affinity, with high nucleotide exchange rates and a fairly low GTP hydrolysis rate. Plays a role in control of the cell cycle, stress response, ribosome biogenesis and in those bacteria that undergo differentiation, in morphogenesis control. In Chlorobium phaeobacteroides (strain BS1), this protein is GTPase Obg.